Reading from the N-terminus, the 240-residue chain is Probable septum site-determining protein MinC (240 aa).

The protein belongs to the MinC family. In terms of assembly, interacts with MinD and FtsZ.

Functionally, cell division inhibitor that blocks the formation of polar Z ring septums. Rapidly oscillates between the poles of the cell to destabilize FtsZ filaments that have formed before they mature into polar Z rings. Prevents FtsZ polymerization. In Acinetobacter baumannii (strain AYE), this protein is Probable septum site-determining protein MinC.